The primary structure comprises 598 residues: uncharacterized protein (598 aa).

The segment covering M1–R23 has biased composition (basic and acidic residues). 3 disordered regions span residues M1–V32, F151–R190, and P222–S241. The span at E225–R235 shows a compositional bias: basic and acidic residues. Residues S238 and S242 each carry the phosphoserine modification. 2 disordered regions span residues R366 to R396 and A551 to P571. Polar residues-rich tracts occupy residues Q369–A386 and A558–S569.

This is an uncharacterized protein from Mus musculus (Mouse).